A 300-amino-acid chain; its full sequence is N-acetylmuramic acid 6-phosphate etherase (300 aa).

The region spanning 55 to 217 (IAERLRAGGR…STGAMIRLGK (163 aa)) is the SIS domain. The active-site Proton donor is glutamate 83. Glutamate 114 is an active-site residue.

The protein belongs to the GCKR-like family. MurNAc-6-P etherase subfamily. As to quaternary structure, homodimer.

It catalyses the reaction N-acetyl-D-muramate 6-phosphate + H2O = N-acetyl-D-glucosamine 6-phosphate + (R)-lactate. Its pathway is amino-sugar metabolism; N-acetylmuramate degradation. Functionally, specifically catalyzes the cleavage of the D-lactyl ether substituent of MurNAc 6-phosphate, producing GlcNAc 6-phosphate and D-lactate. This chain is N-acetylmuramic acid 6-phosphate etherase, found in Symbiobacterium thermophilum (strain DSM 24528 / JCM 14929 / IAM 14863 / T).